Here is a 72-residue protein sequence, read N- to C-terminus: Long neurotoxin OH-17 (72 aa).

5 cysteine pairs are disulfide-bonded: Cys3–Cys21, Cys14–Cys42, Cys27–Cys31, Cys46–Cys57, and Cys58–Cys63.

Belongs to the three-finger toxin family. Long-chain subfamily. Type II alpha-neurotoxin sub-subfamily. Expressed by the venom gland.

Its subcellular location is the secreted. In terms of biological role, binds with high affinity to muscular (alpha-1/CHRNA1) and neuronal (alpha-7/CHRNA7) nicotinic acetylcholine receptor (nAChR) and inhibits acetylcholine from binding to the receptor, thereby impairing neuromuscular and neuronal transmission. This Ophiophagus hannah (King cobra) protein is Long neurotoxin OH-17.